The primary structure comprises 369 residues: D-alanine--D-alanine ligase (369 aa).

The region spanning 152 to 359 (KKLFAAEGLP…YPSLLATMVE (208 aa)) is the ATP-grasp domain. 180 to 235 (RERLGLPVFVKPARGGSSIGVSRVSSWDELDAAVAAARDHDPKVIVEAAIAGRELE) contacts ATP. Positions 314, 326, and 328 each coordinate Mg(2+).

This sequence belongs to the D-alanine--D-alanine ligase family. Requires Mg(2+) as cofactor. Mn(2+) serves as cofactor.

Its subcellular location is the cytoplasm. It catalyses the reaction 2 D-alanine + ATP = D-alanyl-D-alanine + ADP + phosphate + H(+). It participates in cell wall biogenesis; peptidoglycan biosynthesis. In terms of biological role, cell wall formation. The sequence is that of D-alanine--D-alanine ligase from Mycobacterium avium (strain 104).